The primary structure comprises 319 residues: MKPVFLDFEQPIAELTNKIDELRFVQDESAVDISDEIHRLQKKSNDLTKSIFSKLTPAQISQVSRHPQRPYTLDYIEALFTDFEELHGDRHFADDYAIVGGLARFNGQSVMVVGHQKGRDTKEKIRRNFGMPRPEGYRKALRLMKTAEKFGLPVMTFIDTPGAYPGIGAEERGQSEAIGKNLYELTRLRVPVLCTVIGEGGSGGALAVAVGDYVNMLQYSTYSVISPEGCASILWKTAEKAADAAQALGITADRLQKLDLVDTVIKEPLGGAHRDFGQTMKNVKAVLEKQLHEAQSIPLADLLSRRFDRIMAYGKFSEQ.

Residues 39–293 (RLQKKSNDLT…KAVLEKQLHE (255 aa)) form the CoA carboxyltransferase C-terminal domain.

It belongs to the AccA family. As to quaternary structure, acetyl-CoA carboxylase is a heterohexamer composed of biotin carboxyl carrier protein (AccB), biotin carboxylase (AccC) and two subunits each of ACCase subunit alpha (AccA) and ACCase subunit beta (AccD).

The protein resides in the cytoplasm. It catalyses the reaction N(6)-carboxybiotinyl-L-lysyl-[protein] + acetyl-CoA = N(6)-biotinyl-L-lysyl-[protein] + malonyl-CoA. Its pathway is lipid metabolism; malonyl-CoA biosynthesis; malonyl-CoA from acetyl-CoA: step 1/1. In terms of biological role, component of the acetyl coenzyme A carboxylase (ACC) complex. First, biotin carboxylase catalyzes the carboxylation of biotin on its carrier protein (BCCP) and then the CO(2) group is transferred by the carboxyltransferase to acetyl-CoA to form malonyl-CoA. The sequence is that of Acetyl-coenzyme A carboxylase carboxyl transferase subunit alpha from Neisseria meningitidis serogroup A / serotype 4A (strain DSM 15465 / Z2491).